Reading from the N-terminus, the 257-residue chain is DNA repair protein RecO (257 aa).

The protein belongs to the RecO family.

Its function is as follows. Involved in DNA repair and RecF pathway recombination. This Streptococcus thermophilus (strain ATCC BAA-491 / LMD-9) protein is DNA repair protein RecO.